We begin with the raw amino-acid sequence, 482 residues long: Aspartyl/glutamyl-tRNA(Asn/Gln) amidotransferase subunit B (482 aa).

The protein belongs to the GatB/GatE family. GatB subfamily. Heterotrimer of A, B and C subunits.

It catalyses the reaction L-glutamyl-tRNA(Gln) + L-glutamine + ATP + H2O = L-glutaminyl-tRNA(Gln) + L-glutamate + ADP + phosphate + H(+). It carries out the reaction L-aspartyl-tRNA(Asn) + L-glutamine + ATP + H2O = L-asparaginyl-tRNA(Asn) + L-glutamate + ADP + phosphate + 2 H(+). In terms of biological role, allows the formation of correctly charged Asn-tRNA(Asn) or Gln-tRNA(Gln) through the transamidation of misacylated Asp-tRNA(Asn) or Glu-tRNA(Gln) in organisms which lack either or both of asparaginyl-tRNA or glutaminyl-tRNA synthetases. The reaction takes place in the presence of glutamine and ATP through an activated phospho-Asp-tRNA(Asn) or phospho-Glu-tRNA(Gln). This is Aspartyl/glutamyl-tRNA(Asn/Gln) amidotransferase subunit B from Thermotoga sp. (strain RQ2).